The sequence spans 100 residues: Urease subunit gamma (100 aa).

This sequence belongs to the urease gamma subunit family. As to quaternary structure, heterotrimer of UreA (gamma), UreB (beta) and UreC (alpha) subunits. Three heterotrimers associate to form the active enzyme.

It is found in the cytoplasm. It carries out the reaction urea + 2 H2O + H(+) = hydrogencarbonate + 2 NH4(+). The protein operates within nitrogen metabolism; urea degradation; CO(2) and NH(3) from urea (urease route): step 1/1. The sequence is that of Urease subunit gamma from Actinobacillus pleuropneumoniae (Haemophilus pleuropneumoniae).